The following is a 771-amino-acid chain: Tubulin monoglycylase TTLL3 (771 aa).

The interval 70 to 106 (PRPSFSQPRRHDHETETTDEGDSSDEDDLGEEVERDD) is disordered. Residues 86-106 (TTDEGDSSDEDDLGEEVERDD) are compositionally biased toward acidic residues. The 347-residue stretch at 220–566 (EGEKMGEVHN…RRSERNTDTG (347 aa)) folds into the TTL domain. ATP is bound by residues lysine 339, 345-346 (RG), 377-380 (QKYI), 390-392 (KFD), and 434-435 (CN). Arginine 345 contributes to the a protein binding site. Serine 437 is an L-glutamate binding site. Residues aspartate 512, glutamate 525, and asparagine 527 each coordinate Mg(2+). Glutamate 525 is a binding site for ATP. Disordered regions lie at residues 605-640 (LIQS…EEVK) and 682-713 (TELH…PTLY). The span at 614 to 633 (SKSTNHKSSLLSSPCTSGKE) shows a compositional bias: polar residues.

The cofactor is Mg(2+).

It is found in the cytoplasm. The protein resides in the cytoskeleton. Its subcellular location is the cell projection. The protein localises to the cilium. It localises to the cilium axoneme. It is found in the flagellum axoneme. It catalyses the reaction L-glutamyl-[protein] + glycine + ATP = glycyl-L-glutamyl-[protein] + ADP + phosphate + H(+). In terms of biological role, monoglycylase which modifies alpha- and beta-tubulin, adding a single glycine on the gamma-carboxyl groups of specific glutamate residues to generate monoglycine side chains within the C-terminal tail of tubulin. Not involved in elongation step of the polyglycylation reaction. Preferentially glycylates a beta-tail peptide over the alpha-tail, although shifts its preference toward alpha-tail as beta-tail glutamylation increases. Competes with polyglutamylases for modification site on beta-tubulin substrate, thereby creating an anticorrelation between glycylation and glutamylation reactions. Not involved in elongation step of the polyglycylation reaction. In Danio rerio (Zebrafish), this protein is Tubulin monoglycylase TTLL3 (ttll3).